Consider the following 453-residue polypeptide: Ribosomal protein uS12 methylthiotransferase RimO (453 aa).

The MTTase N-terminal domain maps to 5 to 120 (PKVGFVSLGC…VMQAVHSHLP (116 aa)). Residues C14, C50, C79, C151, C155, and C158 each contribute to the [4Fe-4S] cluster site. The Radical SAM core domain maps to 137–382 (LTPRHYAYLK…MEVAEEVSAR (246 aa)). The TRAM domain occupies 385–453 (QRKVGKTLKV…ADGHDLWGEV (69 aa)).

The protein belongs to the methylthiotransferase family. RimO subfamily. [4Fe-4S] cluster is required as a cofactor.

It localises to the cytoplasm. The enzyme catalyses L-aspartate(89)-[ribosomal protein uS12]-hydrogen + (sulfur carrier)-SH + AH2 + 2 S-adenosyl-L-methionine = 3-methylsulfanyl-L-aspartate(89)-[ribosomal protein uS12]-hydrogen + (sulfur carrier)-H + 5'-deoxyadenosine + L-methionine + A + S-adenosyl-L-homocysteine + 2 H(+). Functionally, catalyzes the methylthiolation of an aspartic acid residue of ribosomal protein uS12. This chain is Ribosomal protein uS12 methylthiotransferase RimO, found in Burkholderia vietnamiensis (strain G4 / LMG 22486) (Burkholderia cepacia (strain R1808)).